Consider the following 127-residue polypeptide: Small ribosomal subunit protein uS12 (127 aa).

Position 89 is a 3-methylthioaspartic acid (aspartate 89). The interval 104-127 (TQGVKDRKQARSKYGTKRAKAGKK) is disordered. Basic residues predominate over residues 113–127 (ARSKYGTKRAKAGKK).

The protein belongs to the universal ribosomal protein uS12 family. As to quaternary structure, part of the 30S ribosomal subunit. Contacts proteins S8 and S17. May interact with IF1 in the 30S initiation complex.

In terms of biological role, with S4 and S5 plays an important role in translational accuracy. Interacts with and stabilizes bases of the 16S rRNA that are involved in tRNA selection in the A site and with the mRNA backbone. Located at the interface of the 30S and 50S subunits, it traverses the body of the 30S subunit contacting proteins on the other side and probably holding the rRNA structure together. The combined cluster of proteins S8, S12 and S17 appears to hold together the shoulder and platform of the 30S subunit. This Herminiimonas arsenicoxydans protein is Small ribosomal subunit protein uS12.